The following is a 729-amino-acid chain: Fatty acid oxidation complex subunit alpha (729 aa).

Residues 1–189 are enoyl-CoA hydratase/isomerase; the sequence is MLYQSETLQL…KIGLVDAVVD (189 aa). Position 296 (aspartate 296) interacts with substrate. The segment at 311–729 is 3-hydroxyacyl-CoA dehydrogenase; it reads AAPKLAAVLG…LLDVSTNQPA (419 aa). Residues methionine 324, aspartate 343, 400 to 402, lysine 407, and serine 429 each bind NAD(+); that span reads VVE. Catalysis depends on histidine 450, which acts as the For 3-hydroxyacyl-CoA dehydrogenase activity. Asparagine 453 lines the NAD(+) pocket. Asparagine 500 and tyrosine 660 together coordinate substrate.

In the N-terminal section; belongs to the enoyl-CoA hydratase/isomerase family. It in the C-terminal section; belongs to the 3-hydroxyacyl-CoA dehydrogenase family. Heterotetramer of two alpha chains (FadB) and two beta chains (FadA).

The catalysed reaction is a (3S)-3-hydroxyacyl-CoA + NAD(+) = a 3-oxoacyl-CoA + NADH + H(+). It catalyses the reaction a (3S)-3-hydroxyacyl-CoA = a (2E)-enoyl-CoA + H2O. It carries out the reaction a 4-saturated-(3S)-3-hydroxyacyl-CoA = a (3E)-enoyl-CoA + H2O. The enzyme catalyses (3S)-3-hydroxybutanoyl-CoA = (3R)-3-hydroxybutanoyl-CoA. The catalysed reaction is a (3Z)-enoyl-CoA = a 4-saturated (2E)-enoyl-CoA. It catalyses the reaction a (3E)-enoyl-CoA = a 4-saturated (2E)-enoyl-CoA. It functions in the pathway lipid metabolism; fatty acid beta-oxidation. Functionally, involved in the aerobic and anaerobic degradation of long-chain fatty acids via beta-oxidation cycle. Catalyzes the formation of 3-oxoacyl-CoA from enoyl-CoA via L-3-hydroxyacyl-CoA. It can also use D-3-hydroxyacyl-CoA and cis-3-enoyl-CoA as substrate. The chain is Fatty acid oxidation complex subunit alpha from Yersinia pestis bv. Antiqua (strain Antiqua).